The sequence spans 144 residues: MFEIGFWELVLVAIIGIVVVGPKRLPEVVRTLGLLLRKMRRTISSVRADIERELDLEEMRKLMSDVDEPLKKHVDQLNQSIWQAEYDLRQGGKNLLKMIDEPPYQEPPPAAHSVQTDAEAYRDTGIEPADKSSSPEHHHDDAAR.

The helical transmembrane segment at 1–21 threads the bilayer; it reads MFEIGFWELVLVAIIGIVVVG. The disordered stretch occupies residues 97-144; sequence KMIDEPPYQEPPPAAHSVQTDAEAYRDTGIEPADKSSSPEHHHDDAAR. Positions 119-144 are enriched in basic and acidic residues; it reads EAYRDTGIEPADKSSSPEHHHDDAAR.

It belongs to the TatB family. In terms of assembly, the Tat system comprises two distinct complexes: a TatABC complex, containing multiple copies of TatA, TatB and TatC subunits, and a separate TatA complex, containing only TatA subunits. Substrates initially bind to the TatABC complex, which probably triggers association of the separate TatA complex to form the active translocon.

It is found in the cell inner membrane. Its function is as follows. Part of the twin-arginine translocation (Tat) system that transports large folded proteins containing a characteristic twin-arginine motif in their signal peptide across membranes. Together with TatC, TatB is part of a receptor directly interacting with Tat signal peptides. TatB may form an oligomeric binding site that transiently accommodates folded Tat precursor proteins before their translocation. The sequence is that of Sec-independent protein translocase protein TatB from Dichelobacter nodosus (strain VCS1703A).